We begin with the raw amino-acid sequence, 110 residues long: Large ribosomal subunit protein uL22 (110 aa).

It belongs to the universal ribosomal protein uL22 family. Part of the 50S ribosomal subunit.

Functionally, this protein binds specifically to 23S rRNA; its binding is stimulated by other ribosomal proteins, e.g. L4, L17, and L20. It is important during the early stages of 50S assembly. It makes multiple contacts with different domains of the 23S rRNA in the assembled 50S subunit and ribosome. In terms of biological role, the globular domain of the protein is located near the polypeptide exit tunnel on the outside of the subunit, while an extended beta-hairpin is found that lines the wall of the exit tunnel in the center of the 70S ribosome. The polypeptide is Large ribosomal subunit protein uL22 (Actinobacillus pleuropneumoniae serotype 5b (strain L20)).